Here is a 535-residue protein sequence, read N- to C-terminus: Ankyrin repeat domain-containing protein 34C (535 aa).

4 ANK repeats span residues 10-39, 43-80, 84-114, and 118-147; these read TDGN…YINE, KGET…DPNI, SGKT…DPSL, and TGAS…AKGK. Disordered regions lie at residues 159 to 181 and 214 to 237; these read SGTK…DRHS and AGHP…RKVS. Residues 216–225 show a composition bias toward polar residues; sequence HPSSCNTSKA. Ser301 is modified (phosphoserine). The tract at residues 381–444 is disordered; that stretch reads DLDIQPGPDP…RRRPPHLLER (64 aa). Position 447 is a phosphoserine (Ser447).

The protein belongs to the ANKRD34 family.

The polypeptide is Ankyrin repeat domain-containing protein 34C (ANKRD34C) (Homo sapiens (Human)).